Consider the following 92-residue polypeptide: Alpha-hemoglobin-stabilizing protein (92 aa).

Belongs to the AHSP family. As to quaternary structure, monomer. Forms a heterodimer with free alpha-hemoglobin. Does not bind beta-hemoglobin nor alpha(2)beta(2) hemoglobin A.

Its subcellular location is the cytoplasm. Its function is as follows. Acts as a chaperone to prevent the harmful aggregation of alpha-hemoglobin during normal erythroid cell development. Specifically protects free alpha-hemoglobin from precipitation. This Bos taurus (Bovine) protein is Alpha-hemoglobin-stabilizing protein (AHSP).